The primary structure comprises 424 residues: Histidine--tRNA ligase (424 aa).

It belongs to the class-II aminoacyl-tRNA synthetase family. Homodimer.

It is found in the cytoplasm. It carries out the reaction tRNA(His) + L-histidine + ATP = L-histidyl-tRNA(His) + AMP + diphosphate + H(+). In Salmonella paratyphi A (strain ATCC 9150 / SARB42), this protein is Histidine--tRNA ligase.